The sequence spans 247 residues: 5'-nucleotidase SurE (247 aa).

Positions 8, 9, 39, and 91 each coordinate a divalent metal cation.

This sequence belongs to the SurE nucleotidase family. A divalent metal cation serves as cofactor.

It is found in the cytoplasm. It catalyses the reaction a ribonucleoside 5'-phosphate + H2O = a ribonucleoside + phosphate. Functionally, nucleotidase that shows phosphatase activity on nucleoside 5'-monophosphates. The sequence is that of 5'-nucleotidase SurE from Nitrosomonas eutropha (strain DSM 101675 / C91 / Nm57).